Here is a 464-residue protein sequence, read N- to C-terminus: Asparagine--tRNA ligase (464 aa).

It belongs to the class-II aminoacyl-tRNA synthetase family. As to quaternary structure, homodimer.

Its subcellular location is the cytoplasm. The enzyme catalyses tRNA(Asn) + L-asparagine + ATP = L-asparaginyl-tRNA(Asn) + AMP + diphosphate + H(+). The polypeptide is Asparagine--tRNA ligase (Clostridium beijerinckii (strain ATCC 51743 / NCIMB 8052) (Clostridium acetobutylicum)).